We begin with the raw amino-acid sequence, 7094 residues long: Replicase polyprotein 1ab (7094 aa).

Residues 54–196 form the CoV Nsp1 globular domain; that stretch reads PENHVMVDCR…PWVMYLRKCG (143 aa). The region spanning 216–246 is the BetaCoV Nsp1 C-terminal domain; the sequence is FKVEDAYDLVHDEPKGKFSKKAYALIRGYRG. The CoV Nsp2 N-terminal domain maps to 250-519; the sequence is LLYVDQYGCD…LICKALYLDY (270 aa). Residues cysteine 392, cysteine 397, cysteine 413, and cysteine 416 each coordinate Zn(2+). Residues 392 to 416 are C4; that stretch reads CEQDLCDFKGWVPGNMIDGFACTTC. The region spanning 524-713 is the CoV Nsp2 middle domain; the sequence is CGNLHQRELL…AQAFRSVAKV (190 aa). The CoV Nsp2 C-terminal domain occupies 733–851; sequence RRRICLSGSK…LDQAWRVPCA (119 aa). The 114-residue stretch at 853-966 folds into the Ubiquitin-like 1 domain; the sequence is RCVTFKEQPT…LYCAFTAPED (114 aa). Residues 972-986 are compositionally biased toward acidic residues; it reads ESGVEEDDVEGEETD. The tract at residues 972–992 is disordered; sequence ESGVEEDDVEGEETDLTVTSA. The Peptidase C16 1 domain occupies 1036–1274; it reads DLESVIQDYE…IAQLYGSCIT (239 aa). The For PL1-PRO activity role is filled by cysteine 1074. Residues cysteine 1151, cysteine 1154, cysteine 1177, and cysteine 1179 each contribute to the Zn(2+) site. The segment at 1151-1179 adopts a C4-type 1 zinc-finger fold; sequence CIKCDLALKLKGLDAMFFYGDVVSHVCKC. Active-site for PL1-PRO activity residues include histidine 1225 and aspartate 1236. The 161-residue stretch at 1275–1435 folds into the Macro domain; that stretch reads PNVCFVKGDI…LISKCQITAV (161 aa). The DPUP domain maps to 1491–1563; it reads DDARTFVQSN…VAQIKALFLD (73 aa). The region spanning 1562 to 1617 is the Ubiquitin-like 2 domain; that stretch reads LDKVDILLTVDGVNFTNRFVPVGESFGKSLGNVFCDGVNVTKHKCDINYKGKVFFQ. One can recognise a Peptidase C16 2 domain in the interval 1631–1892; sequence SSFNFDQKEL…KIEYKPDLSQ (262 aa). The active-site For PL2-PRO activity is the cysteine 1671. 4 residues coordinate Zn(2+): cysteine 1749, cysteine 1751, cysteine 1783, and cysteine 1785. A C4-type 2 zinc finger spans residues 1749-1785; that stretch reads CKCGVKQEQRTGVDAVMHFGTLSREDLEIGYTVDCSC. Catalysis depends on for PL2-PRO activity residues histidine 1828 and aspartate 1842. The 102-residue stretch at 1906-2007 folds into the Nucleic acid-binding domain; sequence IKAQFKTFEK…TYFNRPLLVD (102 aa). In terms of domain architecture, G2M spans 2020-2169; sequence DDGGDISESD…ADNKVIYTTE (150 aa). The next 3 membrane-spanning stretches (helical) occupy residues 2138-2158, 2199-2219, and 2221-2241; these read ISAC…WIKI, ACII…NVIF, and DFYL…AQWI. Positions 2138 to 2385 are HD1; sequence ISACFNFIKW…ASFIKLFSLF (248 aa). Residues 2235–2296 form the 3Ecto domain; it reads GKIAQWIKNT…AIDVVQYEAD (62 aa). 2 disulfides stabilise this stretch: cysteine 2251–cysteine 2275 and cysteine 2266–cysteine 2272. Helical transmembrane passes span 2313 to 2333, 2343 to 2363, and 2365 to 2385; these read LIVS…LISI, LFML…ANML, and AHVF…FSLF. Residues 2383-2473 are Y1; that stretch reads SLFRHVAYGC…ELKRPIQPTD (91 aa). Residues 2383 to 2750 enclose the CoV Nsp3 Y domain; sequence SLFRHVAYGC…LTTPFSLKGG (368 aa). Zn(2+) contacts are provided by histidine 2387, cysteine 2392, cysteine 2397, cysteine 2400, cysteine 2433, histidine 2436, cysteine 2440, and cysteine 2443. A ZF1 region spans residues 2387–2400; it reads HVAYGCSKSGCLFC. The interval 2433 to 2443 is ZF2; sequence CSKHQWNCIDC. The interval 2474 to 2566 is Y2; that stretch reads VAYHTVTDVK…MVDKNLITTA (93 aa). Residues 2474 to 2750 are coV-Y; that stretch reads VAYHTVTDVK…LTTPFSLKGG (277 aa). Residues 2567-2649 form a Y3 region; the sequence is NTGTSVTETM…DSVMSAVSAG (83 aa). A Y4 region spans residues 2650-2750; the sequence is LELTDESCNN…LTTPFSLKGG (101 aa). 5 helical membrane passes run 2752–2772, 3031–3051, 3063–3083, 3090–3110, and 3115–3135; these read VFSY…IGLW, ASSI…YYLI, IVFV…VFQV, VYAI…SVIM, and LVMY…SVVV. Residues 2752-3135 form an HD2 region; sequence VFSYFVYVCF…FCLLYISVVV (384 aa). The Nsp4C domain occupies 3149–3246; the sequence is LGTSVRSDGT…TASVSTSFLQ (98 aa). Residues 3247 to 3549 form the Peptidase C30 domain; the sequence is SGIVKMVNPT…YQQLAGIKLQ (303 aa). Active-site for 3CL-PRO activity residues include histidine 3287 and cysteine 3391. 7 consecutive transmembrane segments (helical) span residues 3558 to 3578, 3588 to 3608, 3615 to 3635, 3657 to 3677, 3684 to 3704, 3711 to 3731, and 3755 to 3775; these read GIVC…TAFV, TNML…MLLV, LTMY…LVVY, TYTD…FVTL, LFSF…WYMG, ILLM…LSMA, and IVLV…GLFS. The segment at 3558–3775 is HD3; it reads GIVCWIMAST…IISCYWGLFS (218 aa). Positions 3837–3925 constitute a RdRp Nsp7 cofactor domain; the sequence is SKLTDVKCAN…DYAKDNTVLQ (89 aa). Positions 3926-4122 constitute a RdRp Nsp8 cofactor domain; sequence ALQSEFVNMA…HNEVSATALQ (197 aa). Residues 4123-4232 enclose the Nsp9 ssRNA-binding domain; sequence NNELMPAKLK…GTISSTVRLQ (110 aa). The ExoN/MTase coactivator domain occupies 4233-4370; sequence AGTATEYASN…CVSTDTTVQS (138 aa). The Zn(2+) site is built by cysteine 4306, cysteine 4309, histidine 4315, cysteine 4322, cysteine 4348, cysteine 4351, cysteine 4359, and cysteine 4361. 2 zinc fingers span residues 4306 to 4322 and 4348 to 4361; these read CIYC…DGLC and CQVC…SCSC. The region spanning 4375–4630 is the NiRAN domain; that stretch reads FLNRVRGTSV…DCELYVNNAY (256 aa). Mn(2+)-binding residues include asparagine 4578 and aspartate 4587. A Nsp12 Interface domain is found at 4631 to 4729; sequence RLFDLVQYDF…MNMDVDTHRY (99 aa). Residues histidine 4660, cysteine 4666, cysteine 4671, cysteine 4675, and cysteine 4852 each contribute to the Zn(2+) site. The region spanning 4730-5297 is the Nsp12 RNA-dependent RNA polymerase domain; sequence RLSLKDLLLY…NMYLRSAVMQ (568 aa). The segment at 4732–4946 is rdRp Fingers N-ter; it reads SLKDLLLYAA…HQKCLKSIAA (215 aa). The rdRp Palm N-ter stretch occupies residues 4947-4985; sequence TRGVPVVIGTTKFYGGWDDMLRRLIKDVDNPVLMGWDYP. The 163-residue stretch at 4977–5139 folds into the RdRp catalytic domain; the sequence is PVLMGWDYPK…CYNSDYASKG (163 aa). The segment at 4986-5044 is rdRp Fingers C-ter; it reads KCDRAMPNILRIVSSLVLARKHEACCSQSDRFYRLANEYAQVLSEIVMCGGCYYVKPGG. Residues histidine 5007, cysteine 5010, and cysteine 5011 each coordinate Zn(2+). Positions 5045–5180 are rdRp Palm C-ter; it reads TSSGDATTAF…NNGPHEFCSQ (136 aa). Active-site residues include serine 5124, aspartate 5125, and aspartate 5126. Residues 5181-5297 are rdRp Thumb; that stretch reads HTMLVKMDGD…NMYLRSAVMQ (117 aa). A CV ZBD domain is found at 5298-5410; that stretch reads SVGACVVCSS…DDFNRIASCK (113 aa). Positions 5302, 5305, 5313, 5316, 5323, 5326, 5330, 5336, 5347, 5352, 5369, and 5372 each coordinate Zn(2+). The region spanning 5553–5734 is the (+)RNA virus helicase ATP-binding domain; that stretch reads SVLETFQNNV…MCCLGPDIFL (182 aa). 5578 to 5585 is a binding site for ATP; sequence GPPGTGKS. The region spanning 5735–5904 is the (+)RNA virus helicase C-terminal domain; the sequence is GTCYRCPKEI…VETRVQCSTN (170 aa). The region spanning 5971–6186 is the ExoN domain; sequence LFITKEEAVK…RCLAVYDCFC (216 aa). Catalysis depends on residues aspartate 5989, glutamate 5991, and glutamate 6090. Residues cysteine 6106, cysteine 6109, cysteine 6125, histidine 6128, histidine 6156, cysteine 6160, and histidine 6163 each contribute to the Zn(2+) site. Residues histidine 6167 and aspartate 6172 contribute to the active site. Cysteine 6178 is a Zn(2+) binding site. The N7-MTase domain maps to 6195–6421; sequence YPIISNELSI…NLWNTFTKLQ (227 aa). 6230 to 6236 is an S-adenosyl-L-methionine binding site; it reads DIGNPKA. Residues 6308 to 6322 are gpppA-binding; it reads CNGGSLYVNKHAFHT. Positions 6346, 6367, 6378, and 6381 each coordinate Zn(2+). Residues 6422-6482 form the Nsp15 N-terminal oligomerization domain; sequence SLENVVYNLV…NVAVELFAKR (61 aa). Residues 6483–6603 form the AV-Nsp11N/CoV-Nsp15M domain; it reads SIRHHPELKL…FAVRKEGQDV (121 aa). The NendoU domain occupies 6653-6792; that stretch reads TCRTDMEKDF…NDEKVMTFYL (140 aa). Catalysis depends on residues histidine 6683, histidine 6698, lysine 6738, lysine 6841, aspartate 6925, lysine 6965, and glutamate 6998. Positions 6797 to 7091 constitute a Nidovirus-type SAM-dependent 2'-O-MTase domain; the sequence is ASDWKPGYSM…KEVFVGDSMV (295 aa).

Belongs to the coronaviruses polyprotein 1ab family. Interacts with host PHB and PHB2. In terms of assembly, interacts with papain-like protease nsp3 and non-structural protein 6. As to quaternary structure, monomer. Homodimer. Only the homodimer shows catalytic activity. Interacts with nsp8 and nsp12 to form the replication-transcription complex (RTC): nsp12, nsp7, two subunits of nsp8, and up to two subunits of nsp13. In terms of assembly, interacts with nsp7, nsp13 and nsp12 to form the replication-transcription complex (RTC): nsp12, nsp7, two subunits of nsp8, and up to two subunits of nsp13. As to quaternary structure, interacts with nsp12. Interacts with proofreading exoribonuclease nsp14 and 2'-O-methyltransferase nsp16; these interactions enhance nsp14 and nsp16 enzymatic activities. In terms of assembly, interacts with nsp7 and nsp8 to form the replication-transcription complex (RTC): nsp12, nsp7, two subunits of nsp8, and up to two subunits of nsp13. Interacts with nsp9. As to quaternary structure, interacts with nsp8 to form the replication-transcription complex (RTC): nsp12, nsp7, two subunits of nsp8, and up to two subunits of nsp13. Mn(2+) serves as cofactor. It depends on Mg(2+) as a cofactor. Post-translationally, specific enzymatic cleavages in vivo by its own proteases yield mature proteins. 3CL-PRO and PL-PRO proteinases are autocatalytically processed.

Its subcellular location is the host membrane. It localises to the host cytoplasm. The protein resides in the host perinuclear region. The protein localises to the host endoplasmic reticulum-Golgi intermediate compartment. It carries out the reaction RNA(n) + a ribonucleoside 5'-triphosphate = RNA(n+1) + diphosphate. It catalyses the reaction ATP + H2O = ADP + phosphate + H(+). The enzyme catalyses Thiol-dependent hydrolysis of ester, thioester, amide, peptide and isopeptide bonds formed by the C-terminal Gly of ubiquitin (a 76-residue protein attached to proteins as an intracellular targeting signal).. The catalysed reaction is a 5'-end (N(7)-methyl 5'-triphosphoguanosine)-ribonucleoside in mRNA + S-adenosyl-L-methionine = a 5'-end (N(7)-methyl 5'-triphosphoguanosine)-(2'-O-methyl-ribonucleoside) in mRNA + S-adenosyl-L-homocysteine + H(+). It carries out the reaction uridylyl-uridylyl-ribonucleotide-RNA = a 3'-end uridylyl-2',3'-cyclophospho-uridine-RNA + a 5'-end dephospho-ribonucleoside-RNA. It catalyses the reaction a 5'-end diphospho-ribonucleoside in mRNA + GTP + H(+) = a 5'-end (5'-triphosphoguanosine)-ribonucleoside in mRNA + diphosphate. The enzyme catalyses a 5'-end (5'-triphosphoguanosine)-ribonucleoside in mRNA + S-adenosyl-L-methionine = a 5'-end (N(7)-methyl 5'-triphosphoguanosine)-ribonucleoside in mRNA + S-adenosyl-L-homocysteine. Its function is as follows. The replicase polyprotein of coronaviruses is a multifunctional protein: it contains the activities necessary for the transcription of negative stranded RNA, leader RNA, subgenomic mRNAs and progeny virion RNA as well as proteinases responsible for the cleavage of the polyprotein into functional products. In terms of biological role, inhibits host translation by interacting with the 40S ribosomal subunit. The nsp1-40S ribosome complex further induces an endonucleolytic cleavage near the 5'UTR of host mRNAs, targeting them for degradation. Viral mRNAs are not susceptible to nsp1-mediated endonucleolytic RNA cleavage thanks to the presence of a 5'-end leader sequence and are therefore protected from degradation. By suppressing host gene expression, nsp1 facilitates efficient viral gene expression in infected cells and evasion from host immune response. Functionally, may play a role in the modulation of host cell survival signaling pathway by interacting with host PHB and PHB2. Indeed, these two proteins play a role in maintaining the functional integrity of the mitochondria and protecting cells from various stresses. Responsible for the cleavages located at the N-terminus of the replicase polyprotein. In addition, PL-PRO possesses a deubiquitinating/deISGylating activity and processes both 'Lys-48'- and 'Lys-63'-linked polyubiquitin chains from cellular substrates. Participates together with nsp4 in the assembly of virally-induced cytoplasmic double-membrane vesicles necessary for viral replication. Antagonizes innate immune induction of type I interferon by blocking the phosphorylation, dimerization and subsequent nuclear translocation of host IRF3. Also prevents host NF-kappa-B signaling. Its function is as follows. Participates in the assembly of virally-induced cytoplasmic double-membrane vesicles necessary for viral replication. In terms of biological role, cleaves the C-terminus of replicase polyprotein at 11 sites. Recognizes substrates containing the core sequence [ILMVF]-Q-|-[SGACN]. Also able to bind an ADP-ribose-1''-phosphate (ADRP). Functionally, plays a role in the initial induction of autophagosomes from host endoplasmic reticulum. Later, limits the expansion of these phagosomes that are no longer able to deliver viral components to lysosomes. Forms a hexadecamer with nsp8 (8 subunits of each) that may participate in viral replication by acting as a primase. Alternatively, may synthesize substantially longer products than oligonucleotide primers. Its function is as follows. Forms a hexadecamer with nsp7 (8 subunits of each) that may participate in viral replication by acting as a primase. Alternatively, may synthesize substantially longer products than oligonucleotide primers. In terms of biological role, forms a primer, NSP9-pU, which is utilized by the polymerase for the initiation of RNA chains. Interacts with ribosome signal recognition particle RNA (SRP). Together with NSP8, suppress protein integration into the cell membrane, thereby disrupting host immune defenses. Functionally, plays a pivotal role in viral transcription by stimulating both nsp14 3'-5' exoribonuclease and nsp16 2'-O-methyltransferase activities. Therefore plays an essential role in viral mRNAs cap methylation. RNA-directed RNA polymerase that catalyzes the transcription of viral genomic and subgenomic RNAs. Acts in complex with nsp7 and nsp8 to transcribe both the minus and positive strands of genomic RNA. The kinase-like NiRAN domain of NSP12 attaches one or more nucleotides to the amino terminus of NSP9, forming a covalent RNA-protein intermediate that serves as transcription/replication primer. Subgenomic RNAs (sgRNAs) are formed by discontinuous transcription: The polymerase has the ability to pause at transcription-regulating sequences (TRS) and jump to the leader TRS, resulting in a major deletion. This creates a series of subgenomic RNAs that are replicated, transcribed and translated. In addition, Nsp12 is a subunit of the viral RNA capping enzyme that catalyzes the RNA guanylyltransferase reaction for genomic and sub-genomic RNAs. Subsequently, the NiRAN domain transfers RNA to GDP, and forms the core cap structure GpppA-RNA. Its function is as follows. Multi-functional protein with a zinc-binding domain in N-terminus displaying RNA and DNA duplex-unwinding activities with 5' to 3' polarity. Activity of helicase is dependent on magnesium. In terms of biological role, plays a role in viral RNA synthesis through two distinct activities. The N7-guanine methyltransferase activity plays a role in the formation of the cap structure GpppA-RNA. The proofreading exoribonuclease reduces the sensitivity of the virus to RNA mutagens during replication. This activity acts on both ssRNA and dsRNA in a 3'-5' direction. Functionally, plays a role in viral transcription/replication and prevents the simultaneous activation of host cell dsRNA sensors, such as MDA5/IFIH1, OAS, and PKR. Acts by degrading the 5'-polyuridines generated during replication of the poly(A) region of viral genomic and subgenomic RNAs. Catalyzes a two-step reaction in which a 2'3'-cyclic phosphate (2'3'-cP) is first generated by 2'-O transesterification, which is then hydrolyzed to a 3'-phosphate (3'-P). If not degraded, poly(U) RNA would hybridize with poly(A) RNA tails and activate host dsRNA sensors. Methyltransferase that mediates mRNA cap 2'-O-ribose methylation to the 5'-cap structure of viral mRNAs. N7-methyl guanosine cap is a prerequisite for binding of nsp16. Therefore plays an essential role in viral mRNAs cap methylation which is essential to evade immune system. This chain is Replicase polyprotein 1ab (rep), found in Bos taurus (Bovine).